The chain runs to 260 residues: Transmembrane protein 106C (260 aa).

A lipid anchor (N-myristoyl glycine) is attached at Gly-2. A helical transmembrane segment spans residues 85–105 (YVLLSVLLCLLASGLVFFFLF). The N-linked (GlcNAc...) asparagine glycan is linked to Asn-184. A helical transmembrane segment spans residues 196 to 216 (SYVYFYCTLPAIRVHNIVIFM).

This sequence belongs to the TMEM106 family. Interacts with TMEM106B.

The protein localises to the endoplasmic reticulum membrane. It is found in the membrane. In Mus musculus (Mouse), this protein is Transmembrane protein 106C (Tmem106c).